A 652-amino-acid polypeptide reads, in one-letter code: Acetyl-coenzyme A synthetase (652 aa).

CoA contacts are provided by residues 191–194 (RAGR), T311, and N335. ATP-binding positions include 387-389 (GEP), 411-416 (DTWWQT), D500, and R515. Residue S523 participates in CoA binding. Residue R526 participates in ATP binding. V537, H539, and I542 together coordinate Mg(2+). R584 contacts CoA. N6-acetyllysine is present on K609.

The protein belongs to the ATP-dependent AMP-binding enzyme family. It depends on Mg(2+) as a cofactor. Post-translationally, acetylated. Deacetylation by the SIR2-homolog deacetylase activates the enzyme.

The enzyme catalyses acetate + ATP + CoA = acetyl-CoA + AMP + diphosphate. Its function is as follows. Catalyzes the conversion of acetate into acetyl-CoA (AcCoA), an essential intermediate at the junction of anabolic and catabolic pathways. Acs undergoes a two-step reaction. In the first half reaction, Acs combines acetate with ATP to form acetyl-adenylate (AcAMP) intermediate. In the second half reaction, it can then transfer the acetyl group from AcAMP to the sulfhydryl group of CoA, forming the product AcCoA. Enables the cell to use acetate during aerobic growth to generate energy via the TCA cycle, and biosynthetic compounds via the glyoxylate shunt. Acetylates CheY, the response regulator involved in flagellar movement and chemotaxis. In Serratia proteamaculans (strain 568), this protein is Acetyl-coenzyme A synthetase.